The primary structure comprises 314 residues: Phospholipid phosphatase-related protein type 5 (314 aa).

6 consecutive transmembrane segments (helical) span residues 5-25 (FSLT…VMLA), 61-81 (IPPV…IIVG), 120-140 (FLGI…AGQV), 194-214 (AALS…TIKA), 223-243 (VLCL…VAEY), and 250-270 (VIAG…CVVN).

Belongs to the PA-phosphatase related phosphoesterase family.

It is found in the cell membrane. Induces filopodia formation and promotes neurite growth. The polypeptide is Phospholipid phosphatase-related protein type 5 (Xenopus laevis (African clawed frog)).